Consider the following 529-residue polypeptide: tRNA-2-methylthio-N(6)-dimethylallyladenosine synthase (529 aa).

The MTTase N-terminal domain maps to 18 to 134 (RTYQVRTYGC…LPTLLERARH (117 aa)). [4Fe-4S] cluster is bound by residues C27, C63, C97, C171, C175, and C178. The Radical SAM core domain maps to 157 to 404 (RESAYAGWVS…IELQERISLE (248 aa)). Residues 407-486 (QAQVGRTLEL…PHHLIADGAL (80 aa)) enclose the TRAM domain.

The protein belongs to the methylthiotransferase family. MiaB subfamily. Monomer. [4Fe-4S] cluster is required as a cofactor.

It localises to the cytoplasm. The enzyme catalyses N(6)-dimethylallyladenosine(37) in tRNA + (sulfur carrier)-SH + AH2 + 2 S-adenosyl-L-methionine = 2-methylsulfanyl-N(6)-dimethylallyladenosine(37) in tRNA + (sulfur carrier)-H + 5'-deoxyadenosine + L-methionine + A + S-adenosyl-L-homocysteine + 2 H(+). Its function is as follows. Catalyzes the methylthiolation of N6-(dimethylallyl)adenosine (i(6)A), leading to the formation of 2-methylthio-N6-(dimethylallyl)adenosine (ms(2)i(6)A) at position 37 in tRNAs that read codons beginning with uridine. In Mycobacterium sp. (strain KMS), this protein is tRNA-2-methylthio-N(6)-dimethylallyladenosine synthase.